Consider the following 142-residue polypeptide: Hemoglobin A subunit alpha-2 (142 aa).

Residues Val-2 to Arg-142 form the Globin domain. Residue His-59 coordinates O2. Position 88 (His-88) interacts with heme b.

The protein belongs to the globin family. Tetramer of alpha-1, alpha-2 and two identical beta chains. As to expression, red blood cells.

In terms of biological role, involved in oxygen transport from the lung to the various peripheral tissues. The protein is Hemoglobin A subunit alpha-2 of Aldabrachelys gigantea (Aldabra giant tortoise).